The chain runs to 88 residues: Thioredoxin-2 (88 aa).

The Thioredoxin domain maps to 2-88 (SRVIHISSNE…YRNGAKVSEF (87 aa)). Catalysis depends on nucleophile residues C31 and C34. C31 and C34 form a disulfide bridge.

Belongs to the thioredoxin family.

Its function is as follows. Participates in various redox reactions through the reversible oxidation of its active center dithiol to a disulfide and catalyzes dithiol-disulfide exchange reactions. The polypeptide is Thioredoxin-2 (trxB) (Dictyostelium discoideum (Social amoeba)).